A 243-amino-acid chain; its full sequence is Small ribosomal subunit protein eS4 (243 aa).

Residues 37-99 (IPLALLLKHY…SDLYFRIVPD (63 aa)) enclose the S4 RNA-binding domain.

Belongs to the eukaryotic ribosomal protein eS4 family.

In Sulfurisphaera tokodaii (strain DSM 16993 / JCM 10545 / NBRC 100140 / 7) (Sulfolobus tokodaii), this protein is Small ribosomal subunit protein eS4 (rps4e).